Consider the following 102-residue polypeptide: Large ribosomal subunit protein uL24 (102 aa).

Belongs to the universal ribosomal protein uL24 family. Part of the 50S ribosomal subunit.

Functionally, one of two assembly initiator proteins, it binds directly to the 5'-end of the 23S rRNA, where it nucleates assembly of the 50S subunit. In terms of biological role, one of the proteins that surrounds the polypeptide exit tunnel on the outside of the subunit. This chain is Large ribosomal subunit protein uL24, found in Leuconostoc citreum (strain KM20).